The sequence spans 206 residues: Large ribosomal subunit protein uL4 (206 aa).

Residues 42 to 54 (RRQQGTHQSQGRS) show a composition bias toward polar residues. The interval 42–94 (RRQQGTHQSQGRSDVSRTGAKMFKQKGTGRARHSSARAPQFRGGGKAHGPVFR) is disordered. Over residues 64–76 (FKQKGTGRARHSS) the composition is skewed to basic residues.

The protein belongs to the universal ribosomal protein uL4 family. In terms of assembly, part of the 50S ribosomal subunit.

In terms of biological role, one of the primary rRNA binding proteins, this protein initially binds near the 5'-end of the 23S rRNA. It is important during the early stages of 50S assembly. It makes multiple contacts with different domains of the 23S rRNA in the assembled 50S subunit and ribosome. Forms part of the polypeptide exit tunnel. This is Large ribosomal subunit protein uL4 from Bartonella tribocorum (strain CIP 105476 / IBS 506).